The primary structure comprises 481 residues: Ribosomal RNA small subunit methyltransferase F (481 aa).

S-adenosyl-L-methionine is bound by residues 119–125 (ASAPGSK), Glu-143, Asp-170, and Asp-188. Residue Cys-241 is the Nucleophile of the active site.

The protein belongs to the class I-like SAM-binding methyltransferase superfamily. RsmB/NOP family.

It localises to the cytoplasm. It catalyses the reaction cytidine(1407) in 16S rRNA + S-adenosyl-L-methionine = 5-methylcytidine(1407) in 16S rRNA + S-adenosyl-L-homocysteine + H(+). Functionally, specifically methylates the cytosine at position 1407 (m5C1407) of 16S rRNA. In Shewanella sp. (strain MR-4), this protein is Ribosomal RNA small subunit methyltransferase F.